Here is a 703-residue protein sequence, read N- to C-terminus: Fatty acid oxidation complex subunit alpha (703 aa).

Residues 1–190 form an enoyl-CoA hydratase region; it reads MSEQKAFSLN…KLGVVDACVP (190 aa). A 3-hydroxyacyl-CoA dehydrogenase region spans residues 308 to 703; that stretch reads AAVKKVGVLG…TRAGEGRTFY (396 aa).

The protein in the N-terminal section; belongs to the enoyl-CoA hydratase/isomerase family. It in the central section; belongs to the 3-hydroxyacyl-CoA dehydrogenase family. As to quaternary structure, heterotetramer of two alpha chains (FadJ) and two beta chains (FadI).

Its subcellular location is the cytoplasm. It catalyses the reaction a (3S)-3-hydroxyacyl-CoA = a (2E)-enoyl-CoA + H2O. The catalysed reaction is a 4-saturated-(3S)-3-hydroxyacyl-CoA = a (3E)-enoyl-CoA + H2O. It carries out the reaction a (3S)-3-hydroxyacyl-CoA + NAD(+) = a 3-oxoacyl-CoA + NADH + H(+). The enzyme catalyses (3S)-3-hydroxybutanoyl-CoA = (3R)-3-hydroxybutanoyl-CoA. Its pathway is lipid metabolism; fatty acid beta-oxidation. Catalyzes the formation of a hydroxyacyl-CoA by addition of water on enoyl-CoA. Also exhibits 3-hydroxyacyl-CoA epimerase and 3-hydroxyacyl-CoA dehydrogenase activities. The protein is Fatty acid oxidation complex subunit alpha of Vibrio parahaemolyticus serotype O3:K6 (strain RIMD 2210633).